We begin with the raw amino-acid sequence, 335 residues long: Aspartate carbamoyltransferase catalytic subunit (335 aa).

Carbamoyl phosphate is bound by residues Arg-54 and Thr-55. Residue Lys-82 coordinates L-aspartate. Residues Arg-104, His-134, and Gln-137 each coordinate carbamoyl phosphate. The L-aspartate site is built by Arg-177 and Arg-232. Carbamoyl phosphate contacts are provided by Gly-277 and Pro-278.

The protein belongs to the aspartate/ornithine carbamoyltransferase superfamily. ATCase family. As to quaternary structure, heterododecamer (2C3:3R2) of six catalytic PyrB chains organized as two trimers (C3), and six regulatory PyrI chains organized as three dimers (R2).

It carries out the reaction carbamoyl phosphate + L-aspartate = N-carbamoyl-L-aspartate + phosphate + H(+). It participates in pyrimidine metabolism; UMP biosynthesis via de novo pathway; (S)-dihydroorotate from bicarbonate: step 2/3. Catalyzes the condensation of carbamoyl phosphate and aspartate to form carbamoyl aspartate and inorganic phosphate, the committed step in the de novo pyrimidine nucleotide biosynthesis pathway. In Paenarthrobacter aurescens (strain TC1), this protein is Aspartate carbamoyltransferase catalytic subunit.